The primary structure comprises 155 residues: Small ribosomal subunit protein uS7 (155 aa).

The protein belongs to the universal ribosomal protein uS7 family. As to quaternary structure, part of the 30S ribosomal subunit. Contacts proteins S9 and S11.

Functionally, one of the primary rRNA binding proteins, it binds directly to 16S rRNA where it nucleates assembly of the head domain of the 30S subunit. Is located at the subunit interface close to the decoding center, probably blocks exit of the E-site tRNA. This is Small ribosomal subunit protein uS7 from Xylella fastidiosa (strain M23).